The primary structure comprises 116 residues: Large ribosomal subunit protein uL18 (116 aa).

This sequence belongs to the universal ribosomal protein uL18 family. Part of the 50S ribosomal subunit; part of the 5S rRNA/L5/L18/L25 subcomplex. Contacts the 5S and 23S rRNAs.

This is one of the proteins that bind and probably mediate the attachment of the 5S RNA into the large ribosomal subunit, where it forms part of the central protuberance. The sequence is that of Large ribosomal subunit protein uL18 from Shewanella denitrificans (strain OS217 / ATCC BAA-1090 / DSM 15013).